A 652-amino-acid polypeptide reads, in one-letter code: DNA ligase (652 aa).

NAD(+) is bound by residues 29–33 (DAEYD), 78–79 (SL), and Glu-107. Lys-109 functions as the N6-AMP-lysine intermediate in the catalytic mechanism. NAD(+) contacts are provided by Arg-130, Glu-164, Lys-278, and Lys-302. Zn(2+) is bound by residues Cys-395, Cys-398, Cys-413, and Cys-418. The 76-residue stretch at 577–652 (DENAALSGMT…IKDEAWLESL (76 aa)) folds into the BRCT domain.

This sequence belongs to the NAD-dependent DNA ligase family. LigA subfamily. It depends on Mg(2+) as a cofactor. Requires Mn(2+) as cofactor.

It catalyses the reaction NAD(+) + (deoxyribonucleotide)n-3'-hydroxyl + 5'-phospho-(deoxyribonucleotide)m = (deoxyribonucleotide)n+m + AMP + beta-nicotinamide D-nucleotide.. In terms of biological role, DNA ligase that catalyzes the formation of phosphodiester linkages between 5'-phosphoryl and 3'-hydroxyl groups in double-stranded DNA using NAD as a coenzyme and as the energy source for the reaction. It is essential for DNA replication and repair of damaged DNA. This is DNA ligase from Streptococcus suis (strain 98HAH33).